The primary structure comprises 485 residues: uncharacterized protein (485 aa).

The next 3 membrane-spanning stretches (helical) occupy residues 284-304 (LLAL…YPLF), 328-348 (LLDL…SFIK), and 353-373 (LALT…YNCL).

Belongs to the CBF/MAK21 family.

It localises to the membrane. This is an uncharacterized protein from Schizosaccharomyces pombe (strain 972 / ATCC 24843) (Fission yeast).